Consider the following 255-residue polypeptide: 5-oxoprolinase subunit A 1 (255 aa).

It belongs to the LamB/PxpA family. In terms of assembly, forms a complex composed of PxpA, PxpB and PxpC.

The catalysed reaction is 5-oxo-L-proline + ATP + 2 H2O = L-glutamate + ADP + phosphate + H(+). Functionally, catalyzes the cleavage of 5-oxoproline to form L-glutamate coupled to the hydrolysis of ATP to ADP and inorganic phosphate. This chain is 5-oxoprolinase subunit A 1, found in Bradyrhizobium diazoefficiens (strain JCM 10833 / BCRC 13528 / IAM 13628 / NBRC 14792 / USDA 110).